A 417-amino-acid chain; its full sequence is Serine hydroxymethyltransferase 1 (417 aa).

Residues leucine 121 and 125–127 contribute to the (6S)-5,6,7,8-tetrahydrofolate site; that span reads GHL. Lysine 229 carries the N6-(pyridoxal phosphate)lysine modification. A (6S)-5,6,7,8-tetrahydrofolate-binding site is contributed by 354-356; the sequence is SPF.

Belongs to the SHMT family. Homodimer. The cofactor is pyridoxal 5'-phosphate.

It is found in the cytoplasm. It carries out the reaction (6R)-5,10-methylene-5,6,7,8-tetrahydrofolate + glycine + H2O = (6S)-5,6,7,8-tetrahydrofolate + L-serine. It functions in the pathway one-carbon metabolism; tetrahydrofolate interconversion. The protein operates within amino-acid biosynthesis; glycine biosynthesis; glycine from L-serine: step 1/1. In terms of biological role, catalyzes the reversible interconversion of serine and glycine with tetrahydrofolate (THF) serving as the one-carbon carrier. This reaction serves as the major source of one-carbon groups required for the biosynthesis of purines, thymidylate, methionine, and other important biomolecules. Also exhibits THF-independent aldolase activity toward beta-hydroxyamino acids, producing glycine and aldehydes, via a retro-aldol mechanism. The protein is Serine hydroxymethyltransferase 1 of Pseudomonas syringae pv. syringae (strain B728a).